The primary structure comprises 233 residues: Bcl-2-like protein 1 (233 aa).

Residues 4-24 (SNRELVVDFLSYKLSQKGYSW) carry the BH4 motif. Residues 29-71 (DVEENRTEAPEGTESEAETPSAINGNPSWHLADSPAVNGATGH) are disordered. Position 49 is a phosphoserine; by PLK3 (serine 49). Position 62 is a phosphoserine; by CDK1 (serine 62). A BH3 motif is present at residues 86 to 100 (VKQALREAGDEFELR). The BH1 motif lies at 129–148 (ELFRDGVNWGRIVAFFSFGG). The short motif at 180–195 (PWIQENGGWDTFVELY) is the BH2 element. The chain crosses the membrane as a helical span at residues 210 to 226 (FNRWFLTGMTLAGVVLL).

This sequence belongs to the Bcl-2 family. As to quaternary structure, homodimer. Heterodimers with BAX, BAK or BCL2. Heterodimerization with BAX does not seem to be required for anti-apoptotic activity. Interacts with BCL2L11. Interacts with BAD. Interacts with SIVA1 isoform 1; the interaction inhibits the anti-apoptotic activity. Interacts with BECN1 and PGAM5. Interacts with IKZF3. Interacts with HEBP2. Interacts with BOP. Interacts with p53/TP53 and BBC3; interaction with BBC3 disrupts the interaction with p53/TP53. Interacts with DNM1L and CLTA; DNM1L and BCL2L1 may form a complex in synaptic vesicles that also contains clathrin and MFF. Interacts with ATP5F1A and ATP5F1B; the interactions mediate the association of BCL2L1 with the mitochondrial membrane ATP synthase F(1)F(0) ATP synthase. Interacts with VDAC1. Interacts (via the loop between motifs BH4 and BH3) with NLRP1 (via LRR repeats), but not with NLRP2, NLRP3, NLRP4, PYCARD, nor MEFV. Interacts with BCL2L11 (via BH3). Interacts with RNF183. Interacts with GIMAP3/IAN4. Interacts with GIMAP5 and HSPA8/HSC70; the interaction between HSPA8 and BCL2L1 is impaired in the absence of GIMAP5. Interacts with CLU (isoform 4); this interaction releases and activates BAX and promotes cell death. Proteolytically cleaved by caspases during apoptosis. The cleaved protein, lacking the BH4 motif, has pro-apoptotic activity. Post-translationally, phosphorylated on Ser-62 by CDK1. This phosphorylation is partial in normal mitotic cells, but complete in G2-arrested cells upon DNA-damage, thus promoting subsequent apoptosis probably by triggering caspases-mediated proteolysis. Phosphorylated by PLK3, leading to regulate the G2 checkpoint and progression to cytokinesis during mitosis. Phosphorylation at Ser-49 appears during the S phase and G2, disappears rapidly in early mitosis during prometaphase, metaphase and early anaphase, and re-appears during telophase and cytokinesis. In terms of processing, ubiquitinated by RNF183 during prolonged ER stress, leading to degradation by the proteosome.

Its subcellular location is the mitochondrion membrane. The protein localises to the nucleus membrane. The protein resides in the mitochondrion matrix. It is found in the cytoplasm. It localises to the cytoskeleton. Its subcellular location is the microtubule organizing center. The protein localises to the centrosome. The protein resides in the cytosol. It is found in the cytoplasmic vesicle. It localises to the secretory vesicle. Its subcellular location is the synaptic vesicle membrane. Its function is as follows. Potent inhibitor of cell death. Inhibits activation of caspases. Appears to regulate cell death by blocking the voltage-dependent anion channel (VDAC) by binding to it and preventing the release of the caspase activator, CYC1, from the mitochondrial membrane. Also acts as a regulator of G2 checkpoint and progression to cytokinesis during mitosis. Regulates presynaptic plasticity, including neurotransmitter release and recovery, number of axonal mitochondria as well as size and number of synaptic vesicle clusters. During synaptic stimulation, increases ATP availability from mitochondria through regulation of mitochondrial membrane ATP synthase F(1)F(0) activity and regulates endocytic vesicle retrieval in hippocampal neurons through association with DMN1L and stimulation of its GTPase activity in synaptic vesicles. May attenuate inflammation impairing NLRP1-inflammasome activation, hence CASP1 activation and IL1B release. The protein is Bcl-2-like protein 1 (BCL2L1) of Sus scrofa (Pig).